The chain runs to 40 residues: MADTTGRIPLWLIGTVTGILVIGLIGFFFYGSYSGLGSSL.

A helical membrane pass occupies residues 8–28 (IPLWLIGTVTGILVIGLIGFF).

This sequence belongs to the PsbJ family. In terms of assembly, PSII is composed of 1 copy each of membrane proteins PsbA, PsbB, PsbC, PsbD, PsbE, PsbF, PsbH, PsbI, PsbJ, PsbK, PsbL, PsbM, PsbT, PsbX, PsbY, PsbZ, Psb30/Ycf12, at least 3 peripheral proteins of the oxygen-evolving complex and a large number of cofactors. It forms dimeric complexes.

Its subcellular location is the plastid. The protein localises to the chloroplast thylakoid membrane. Functionally, one of the components of the core complex of photosystem II (PSII). PSII is a light-driven water:plastoquinone oxidoreductase that uses light energy to abstract electrons from H(2)O, generating O(2) and a proton gradient subsequently used for ATP formation. It consists of a core antenna complex that captures photons, and an electron transfer chain that converts photonic excitation into a charge separation. The sequence is that of Photosystem II reaction center protein J from Zea mays (Maize).